Here is a 635-residue protein sequence, read N- to C-terminus: Sodium- and chloride-dependent creatine transporter 1 (635 aa).

Residues 1–35 (MAKKSAENGIYSVSGDEKKGPLIAPGPDGAPAKGD) are disordered. The Cytoplasmic portion of the chain corresponds to 1–60 (MAKKSAENGIYSVSGDEKKGPLIAPGPDGAPAKGDGPAGLGAPGGCLAVPPRETWTRQMD). A compositionally biased stretch (low complexity) spans 25–35 (PGPDGAPAKGD). Residues 61 to 81 (FIMSCVGFAVGLGNVWRFPYL) traverse the membrane as a helical segment. The Extracellular portion of the chain corresponds to 82-87 (CYKNGG). Residues 88–108 (GVFLIPYVLIALVGGIPIFFL) form a helical membrane-spanning segment. The Cytoplasmic portion of the chain corresponds to 109–138 (EISLGQFMKAGSINVWNICPLFKGLGYASM). Residues 139-159 (VIVFYCNTYYIMVLAWGFYYL) traverse the membrane as a helical segment. The Extracellular portion of the chain corresponds to 160–230 (VKSFTTTLPW…LSGGLEVPGA (71 aa)). Asparagine 192 and asparagine 197 each carry an N-linked (GlcNAc...) asparagine glycan. Residues 231-251 (LNSEVTLCLLACWVLVYFCVW) traverse the membrane as a helical segment. Residues 252–269 (KGVKSTGKIVYFTATFPY) lie on the Cytoplasmic side of the membrane. Residues 270–290 (VVLVVLLVRGVLLPGALDGII) traverse the membrane as a helical segment. Residues 291 to 304 (YYLKPDWSKLRSPQ) are Extracellular-facing. The helical transmembrane segment at 305 to 325 (VWIDAGTQIFFSYAIGLGALT) threads the bilayer. Residues 326–341 (ALGSYNRFNNNCYKDA) are Cytoplasmic-facing. Residues 342–362 (IILALINSGTSFFAGFVVFSI) traverse the membrane as a helical segment. Residues 363–394 (LGFMATEQGVHISKVAESGPGLAFIAYPRAVT) are Extracellular-facing. A helical transmembrane segment spans residues 395–415 (LMPVAPLWAALFFFMLLLLGL). Topologically, residues 416–444 (DSQFVGVEGFITGLLDLLPASYYFRFQRE) are cytoplasmic. A helical membrane pass occupies residues 445–465 (ISVALCCALCFVIDLSMVQMA). Over 466–479 (GMYVFQLFDYYSAS) the chain is Extracellular. Residues 480–500 (GTTLLWQAFWECVAVAWVYGA) traverse the membrane as a helical segment. Over 501–520 (DRFMDDIACMIGYRPCPWMK) the chain is Cytoplasmic. Residues 521–541 (WCWSFFTPLVCMGIFIFNIVY) traverse the membrane as a helical segment. Over 542-560 (YKPLVYNKTYVYPWWGEAM) the chain is Extracellular. N-linked (GlcNAc...) asparagine glycosylation is present at asparagine 548. Residues 561–581 (GWAFALSSMLCVPLHLLGCLL) traverse the membrane as a helical segment. Residues 582–635 (RAKGTMAERWQHLTQPVWGLHHLEYRAQDADVRGLTTLTPVSESSKVVVVESVM) are Cytoplasmic-facing. Phosphothreonine occurs at positions 617 and 620. Serine 623 bears the Phosphoserine mark.

This sequence belongs to the sodium:neurotransmitter symporter (SNF) (TC 2.A.22) family. SLC6A8 subfamily. Glycosylated. Prominent in kidney, heart, and muscle, also present in brain, but not in liver and intestine.

The protein localises to the cell membrane. It localises to the apical cell membrane. The enzyme catalyses creatine(out) + chloride(out) + 2 Na(+)(out) = creatine(in) + chloride(in) + 2 Na(+)(in). In terms of biological role, creatine:sodium symporter which mediates the uptake of creatine. Plays an important role in supplying creatine to the brain via the blood-brain barrier. This is Sodium- and chloride-dependent creatine transporter 1 (SLC6A8) from Oryctolagus cuniculus (Rabbit).